A 158-amino-acid polypeptide reads, in one-letter code: GTP-dependent dephospho-CoA kinase (158 aa).

D35, V36, D54, K56, E109, and D132 together coordinate GTP.

Belongs to the GTP-dependent DPCK family.

The enzyme catalyses 3'-dephospho-CoA + GTP = GDP + CoA + H(+). It functions in the pathway cofactor biosynthesis; coenzyme A biosynthesis. In terms of biological role, catalyzes the GTP-dependent phosphorylation of the 3'-hydroxyl group of dephosphocoenzyme A to form coenzyme A (CoA). This Methanococcus maripaludis (strain DSM 14266 / JCM 13030 / NBRC 101832 / S2 / LL) protein is GTP-dependent dephospho-CoA kinase.